Reading from the N-terminus, the 342-residue chain is Ribosomal RNA small subunit methyltransferase H (342 aa).

S-adenosyl-L-methionine is bound by residues 43 to 45 (GGY), aspartate 61, phenylalanine 87, aspartate 108, and glutamine 115. A disordered region spans residues 322-342 (ALDEASDGMNLPPLAELEKSR).

It belongs to the methyltransferase superfamily. RsmH family.

The protein localises to the cytoplasm. The catalysed reaction is cytidine(1402) in 16S rRNA + S-adenosyl-L-methionine = N(4)-methylcytidine(1402) in 16S rRNA + S-adenosyl-L-homocysteine + H(+). Its function is as follows. Specifically methylates the N4 position of cytidine in position 1402 (C1402) of 16S rRNA. The sequence is that of Ribosomal RNA small subunit methyltransferase H from Hyphomonas neptunium (strain ATCC 15444).